A 124-amino-acid polypeptide reads, in one-letter code: Small ribosomal subunit protein uS12 (124 aa).

3-methylthioaspartic acid is present on aspartate 89.

Belongs to the universal ribosomal protein uS12 family. As to quaternary structure, part of the 30S ribosomal subunit. Contacts proteins S8 and S17. May interact with IF1 in the 30S initiation complex.

Its function is as follows. With S4 and S5 plays an important role in translational accuracy. In terms of biological role, interacts with and stabilizes bases of the 16S rRNA that are involved in tRNA selection in the A site and with the mRNA backbone. Located at the interface of the 30S and 50S subunits, it traverses the body of the 30S subunit contacting proteins on the other side and probably holding the rRNA structure together. The combined cluster of proteins S8, S12 and S17 appears to hold together the shoulder and platform of the 30S subunit. The protein is Small ribosomal subunit protein uS12 of Buchnera aphidicola subsp. Schizaphis graminum (strain Sg).